The primary structure comprises 686 residues: Myb-related protein B (686 aa).

The tract at residues 1 to 28 is disordered; the sequence is MARRSRGEDQDELHCQDTDSDVPEQRDG. 3 consecutive HTH myb-type domains span residues 26–77, 78–133, and 134–184; these read RDGR…LRVL, NPDL…NPEV, and KKSS…KRKV. DNA-binding regions (H-T-H motif) lie at residues 54–77, 106–129, and 157–180; these read WKFLASHFPNRSDQQCQYRWLRVL, WTLIAKHLKGRLGKQCRERWHNHL, and WAEIAKLLPGRTDNAVKNHWNSTI. 2 disordered regions span residues 315-355 and 493-512; these read CDLT…VTEY and YVVDNTPHTPTPFKNALEKY. Low complexity predominate over residues 326–343; the sequence is PSAGSSSSSNSPVRQTPS.

As to quaternary structure, component of the DREAM complex. In terms of tissue distribution, expressed in hematopoietic and non hematopoietic cells.

It is found in the nucleus. Its function is as follows. Represses v-myb- and c-myb-mediated activation of the mim-1 gene, probably by competing with other myb proteins for binding sites. It is an inhibitory member of the myb family. The polypeptide is Myb-related protein B (MYBL2) (Gallus gallus (Chicken)).